A 308-amino-acid polypeptide reads, in one-letter code: Olfactory receptor 4E2 (308 aa).

Residues 1–24 (MGALNQTRVTEFIFLGLTDNWVLE) lie on the Extracellular side of the membrane. The N-linked (GlcNAc...) asparagine glycan is linked to N5. A helical transmembrane segment spans residues 25–45 (ILFFVPFTVTYMLTLLGNFLI). At 46-57 (VVTIVFTPRLHN) the chain is on the cytoplasmic side. Residues 58–78 (PMYFFLSNLSFIDICHSSVTV) form a helical membrane-spanning segment. Over 79 to 97 (PKMLEGLLLERKTISFDNC) the chain is Extracellular. An intrachain disulfide couples C97 to C179. Residues 98–118 (IAQLFFLHLFACSEIFLLTIM) form a helical membrane-spanning segment. Cu cation is bound by residues H105 and C109. The Cytoplasmic segment spans residues 119-143 (AYDRYVAICIPLHYSNVMNMKVCVQ). A helical transmembrane segment spans residues 144–164 (LVFALWLGGTIHSLVQTFLTI). At 165–204 (RLPYCGPNIIDSYFCDVPPVIKLACTDTYLTGILIVSNSG) the chain is on the extracellular side. Residues 205 to 225 (TISLVCFLALVTSYTVILFSL) traverse the membrane as a helical segment. Topologically, residues 226–236 (RKQSAEGRRKA) are cytoplasmic. The chain crosses the membrane as a helical span at residues 237–257 (LSTCSAHFMVVALFFGPCIFL). The Extracellular portion of the chain corresponds to 258–268 (YTRPDSSFSID). R260 contributes to the Cu cation binding site. A helical transmembrane segment spans residues 269–289 (KVVSVFYTVVTPLLNPLIYTL). At 290-308 (RNEEVKTAMKHLRQRRICS) the chain is on the cytoplasmic side.

The protein belongs to the G-protein coupled receptor 1 family. Expressed in olfactory epithelium, specifically in the olfactory sensory neurons of the septal organ.

The protein resides in the cell membrane. Copper binding enhances receptor activity in response to odorant binding. Functionally, olfactory receptor that is activated by the binding of organosulfur odorants with thioether groups such as (methylthio)methanethiol (MTMT) and bis(methylthiomethyl) disulfide. Also binds odorants cis-cyclooctene and tert-butyl mercaptan. The activity of this receptor is mediated by G proteins which activate adenylyl cyclase (Potential). The polypeptide is Olfactory receptor 4E2 (Mus musculus (Mouse)).